The following is a 67-amino-acid chain: Kappa-conotoxin-like 1 (67 aa).

Residues 1–26 (MMFRLTSVSCFLLVIACLNLFQVVLT) form the signal peptide. 4 disulfide bridges follow: Cys29–Cys43, Cys36–Cys48, Cys42–Cys51, and Cys47–Cys55. Isoleucine amide is present on Ile59. Residues 63-67 (ATFQE) constitute a propeptide that is removed on maturation.

It belongs to the conotoxin I2 superfamily. As to expression, expressed by the venom duct.

Its subcellular location is the secreted. Its function is as follows. Inhibits the vertebrate voltage-gated potassium channels Kv1.1/KCNA1 and Kv1.3/KCNA3. The protein is Kappa-conotoxin-like 1 of Conus vexillum (Flag cone).